A 764-amino-acid polypeptide reads, in one-letter code: Kinesin-like protein KIN-14N (764 aa).

A disordered region spans residues 1–50; that stretch reads MSTRATRPGMLHQKENAADAQAGKRQRTAAGSAARAPLSANAAPPAPDPA. The segment covering 29-50 has biased composition (low complexity); it reads AAGSAARAPLSANAAPPAPDPA. A coiled-coil region spans residues 105-416; sequence AEIGKLNGLL…RLHNTILELK (312 aa). One can recognise a Kinesin motor domain in the interval 418–747; the sequence is NIRVFCRVRP…LRFAARVNSC (330 aa). 498-505 provides a ligand contact to ATP; the sequence is GQTGSGKT.

This sequence belongs to the TRAFAC class myosin-kinesin ATPase superfamily. Kinesin family. KIN-14 subfamily.

This Oryza sativa subsp. japonica (Rice) protein is Kinesin-like protein KIN-14N.